Here is a 21-residue protein sequence, read N- to C-terminus: Misgurin (21 aa).

A disordered region spans residues arginine 1–lysine 21. Positions phenylalanine 10 to lysine 21 are enriched in basic residues.

The protein localises to the secreted. Its function is as follows. Strong antimicrobial activity against several Gram-positive and Gram-negative bacteria and fungi. The polypeptide is Misgurin (Misgurnus anguillicaudatus (Oriental weatherloach)).